The following is a 459-amino-acid chain: Probable acetate kinase (459 aa).

Asn9 lines the Mg(2+) pocket. Lys16 contributes to the ATP binding site. Arg100 serves as a coordination point for substrate. Asp156 functions as the Proton donor/acceptor in the catalytic mechanism. ATP is bound by residues 216 to 220 and 299 to 301; these read HLGSG and DFR. Residues 308–338 form a disordered region; that stretch reads TTTSSPTPSPNPNPNPNPDPNPDPNPDPQNQ. The segment covering 314-334 has biased composition (pro residues); the sequence is TPSPNPNPNPNPDPNPDPNPD. Glu441 serves as a coordination point for Mg(2+).

The protein belongs to the acetokinase family. It depends on Mg(2+) as a cofactor.

It carries out the reaction acetate + ATP = acetyl phosphate + ADP. It functions in the pathway metabolic intermediate biosynthesis; acetyl-CoA biosynthesis; acetyl-CoA from acetate: step 1/2. This chain is Probable acetate kinase, found in Chaetomium globosum (strain ATCC 6205 / CBS 148.51 / DSM 1962 / NBRC 6347 / NRRL 1970) (Soil fungus).